Reading from the N-terminus, the 517-residue chain is Serine hydroxymethyltransferase 2, mitochondrial (517 aa).

The transit peptide at 1 to 29 (MALALRRLSSSVKKPISLLSSNGGSLRFM) directs the protein to the mitochondrion. Residue serine 82 coordinates L-serine. Pemetrexed-binding positions include serine 82, tyrosine 102, glutamate 104, tyrosine 112, 148–150 (SGS), and histidine 177. The L-serine site is built by glutamate 104 and tyrosine 112. Glutamate 104 contacts methotrexate. Residue 184-186 (TDT) coordinates methotrexate. The pemetrexed site is built by serine 232 and histidine 260. Residues histidine 260 and lysine 286 each coordinate L-serine. An N6-(pyridoxal phosphate)lysine modification is found at lysine 286. Glycine 331 contributes to the pemetrexed binding site. Lysine 414 provides a ligand contact to methotrexate. Position 430 (arginine 430) interacts with L-serine. Position 430 (arginine 430) interacts with pemetrexed.

Belongs to the SHMT family. Homotetramer. Pyridoxal 5'-phosphate is required as a cofactor. As to expression, ubiquitous. Mainly expressed in the shoot apical meristem and roots. Also detected in the leaf vasculature, especially in the protoxylem and adjacent cell layers.

It localises to the mitochondrion. It catalyses the reaction (6R)-5,10-methylene-5,6,7,8-tetrahydrofolate + glycine + H2O = (6S)-5,6,7,8-tetrahydrofolate + L-serine. The protein operates within one-carbon metabolism; tetrahydrofolate interconversion. Its activity is regulated as follows. Inhibited by the antifolate drugs methotrexate and pemetrexed. Functions outside the photorespiratory pathway in catalyzing the interconversion of serine and glycine with the conversion of tetrahydrofolate (THF) into 5,10-methylene-THF. The chain is Serine hydroxymethyltransferase 2, mitochondrial from Arabidopsis thaliana (Mouse-ear cress).